A 251-amino-acid polypeptide reads, in one-letter code: MNLISIPALQDNYIWLLSNKANRCVIVDPGEASPVLNALDQNALLPEAILLTHHHNDHVGGVSEILNHYPNLPVFGPKETAKCGATYLVEEGNTVSLLNSEFSVIEVPGHTSGHIAYYNAPFLFCGDTLFSAGCGRIFEGTPKQMYESIQKIAELPDDTVVCCAHEYTLSNLRFSNDIWPEDPDIESYLHKISQIREKSQSSLPTTLGLERRINLFLRCHEIDLKRKISNEPENIENWQVFKMLRSKKDCF.

Residues His53, His55, Asp57, His58, His110, Asp127, and His165 each contribute to the Zn(2+) site.

The protein belongs to the metallo-beta-lactamase superfamily. Glyoxalase II family. In terms of assembly, monomer. Requires Zn(2+) as cofactor.

The catalysed reaction is an S-(2-hydroxyacyl)glutathione + H2O = a 2-hydroxy carboxylate + glutathione + H(+). It participates in secondary metabolite metabolism; methylglyoxal degradation; (R)-lactate from methylglyoxal: step 2/2. Functionally, thiolesterase that catalyzes the hydrolysis of S-D-lactoyl-glutathione to form glutathione and D-lactic acid. The sequence is that of Hydroxyacylglutathione hydrolase from Pectobacterium atrosepticum (strain SCRI 1043 / ATCC BAA-672) (Erwinia carotovora subsp. atroseptica).